A 502-amino-acid polypeptide reads, in one-letter code: Glycerol kinase (502 aa).

Thr13 contacts ADP. Thr13, Thr14, and Ser15 together coordinate ATP. Thr13 is a sn-glycerol 3-phosphate binding site. Arg17 provides a ligand contact to ADP. Sn-glycerol 3-phosphate-binding residues include Arg83, Glu84, Tyr136, and Asp246. Glycerol-binding residues include Arg83, Glu84, Tyr136, Asp246, and Gln247. ADP contacts are provided by Thr268 and Gly311. 4 residues coordinate ATP: Thr268, Gly311, Gln315, and Gly412. 2 residues coordinate ADP: Gly412 and Asn416.

This sequence belongs to the FGGY kinase family.

The catalysed reaction is glycerol + ATP = sn-glycerol 3-phosphate + ADP + H(+). It functions in the pathway polyol metabolism; glycerol degradation via glycerol kinase pathway; sn-glycerol 3-phosphate from glycerol: step 1/1. With respect to regulation, inhibited by fructose 1,6-bisphosphate (FBP). Its function is as follows. Key enzyme in the regulation of glycerol uptake and metabolism. Catalyzes the phosphorylation of glycerol to yield sn-glycerol 3-phosphate. The sequence is that of Glycerol kinase from Francisella tularensis subsp. holarctica (strain FTNF002-00 / FTA).